The chain runs to 151 residues: UPF0178 protein Spea_2958 (151 aa).

The protein belongs to the UPF0178 family.

This Shewanella pealeana (strain ATCC 700345 / ANG-SQ1) protein is UPF0178 protein Spea_2958.